Here is a 325-residue protein sequence, read N- to C-terminus: Centromere protein O (325 aa).

Positions 1–35 (MEEERNSDEKENALCGRSLTAASRDGGGRMPAAPL) are disordered. Residues 55–112 (LEMLEAQAHELGLKQEEKEQQEKKLDRLKARVQELRARRDELRAKVELQEKRLLDKEG) adopt a coiled-coil conformation.

The protein belongs to the CENP-O/MCM21 family. Component of the CENPA-HI complex, at least composed of CENPH, CENPI, CENPK, CENPL, CENPM, CENPO and CENPP. Component of a discrete complex composed of at least CENPO, CENPP, CENPQ, CENPR and CENPU.

Its subcellular location is the nucleus. It is found in the chromosome. It localises to the centromere. Its function is as follows. Component of the CENPA-HI complex, a centromeric complex involved in assembly of kinetochore proteins, mitotic progression and chromosome segregation. Involved in kinetochore assembly and required for recovery from spindle damage. This Gallus gallus (Chicken) protein is Centromere protein O (CENPO).